We begin with the raw amino-acid sequence, 400 residues long: Argininosuccinate synthase (400 aa).

ATP is bound by residues 10-18 and Ala-38; that span reads AYSGGVDTS. Residue Tyr-89 participates in L-citrulline binding. Gly-119 provides a ligand contact to ATP. L-aspartate-binding residues include Thr-121, Asn-125, and Asp-126. Asn-125 contributes to the L-citrulline binding site. Arg-129, Ser-177, Ser-186, Glu-262, and Tyr-274 together coordinate L-citrulline.

The protein belongs to the argininosuccinate synthase family. Type 1 subfamily. As to quaternary structure, homotetramer.

It localises to the cytoplasm. The enzyme catalyses L-citrulline + L-aspartate + ATP = 2-(N(omega)-L-arginino)succinate + AMP + diphosphate + H(+). It functions in the pathway amino-acid biosynthesis; L-arginine biosynthesis; L-arginine from L-ornithine and carbamoyl phosphate: step 2/3. The polypeptide is Argininosuccinate synthase (Nostoc punctiforme (strain ATCC 29133 / PCC 73102)).